A 141-amino-acid polypeptide reads, in one-letter code: Auxin-responsive protein SAUR61 (141 aa).

Belongs to the ARG7 family.

It is found in the cell membrane. Functionally, may promote auxin-stimulated organ elongation, such as hypocotyls, stamen filaments and petals. The sequence is that of Auxin-responsive protein SAUR61 from Arabidopsis thaliana (Mouse-ear cress).